Here is a 245-residue protein sequence, read N- to C-terminus: MIIPALDLIDGTVVRLHQGDYGQQRDYGNDPLPRLQDYAAQGAEVLHLVDLTGAKDPAKRQITLLKSLVSGVDVPVQVGGGVRTEEDVAALLEAGVARVVVGSTAVKDPEMVKDWFRRFGADALVLALDVRIDDQGNKQVAVSGWQENSGVTLEELVEIYLPVGLKHVLCTDISRDGTLAGSNVSLYEEVCARYPQVAFQSSGGIGDLADIAALRGTGVRGVIVGRALLEEKFTVTEAIQCWQNG.

The Proton acceptor role is filled by Asp-7. The active-site Proton donor is the Asp-129.

The protein belongs to the HisA/HisF family.

Its subcellular location is the cytoplasm. The catalysed reaction is 1-(5-phospho-beta-D-ribosyl)-5-[(5-phospho-beta-D-ribosylamino)methylideneamino]imidazole-4-carboxamide = 5-[(5-phospho-1-deoxy-D-ribulos-1-ylimino)methylamino]-1-(5-phospho-beta-D-ribosyl)imidazole-4-carboxamide. It functions in the pathway amino-acid biosynthesis; L-histidine biosynthesis; L-histidine from 5-phospho-alpha-D-ribose 1-diphosphate: step 4/9. The protein is 1-(5-phosphoribosyl)-5-[(5-phosphoribosylamino)methylideneamino] imidazole-4-carboxamide isomerase of Enterobacter sp. (strain 638).